A 130-amino-acid chain; its full sequence is Small ribosomal subunit protein uS9 (130 aa).

The protein belongs to the universal ribosomal protein uS9 family.

This chain is Small ribosomal subunit protein uS9, found in Carboxydothermus hydrogenoformans (strain ATCC BAA-161 / DSM 6008 / Z-2901).